The primary structure comprises 893 residues: Ubiquitin-like protease 2 (893 aa).

The tract at residues Pro-538–Lys-800 is protease. Active-site residues include His-644, Asp-678, and Cys-743.

Belongs to the peptidase C48 family.

The protein resides in the nucleus. Its subcellular location is the cytoplasm. It is found in the cytosol. Protease that catalyzes two essential functions in the smo-1 pathway: processing of full-length smo-1 to their mature forms and deconjugation of smo-1 from targeted proteins. May deconjugate smo-1 from the cadherin protein hmr-1 and plays a role in its recruitment to and the maintenance of adherens junctions. Required for epidermal morphogenesis during embryonic development. In Caenorhabditis elegans, this protein is Ubiquitin-like protease 2.